The chain runs to 233 residues: 7-cyano-7-deazaguanine synthase (233 aa).

Residue 7 to 17 (LSGGLDSLVTS) participates in ATP binding. Residues Cys-195, Cys-206, Cys-209, and Cys-212 each contribute to the Zn(2+) site.

It belongs to the QueC family. The cofactor is Zn(2+).

The catalysed reaction is 7-carboxy-7-deazaguanine + NH4(+) + ATP = 7-cyano-7-deazaguanine + ADP + phosphate + H2O + H(+). It functions in the pathway purine metabolism; 7-cyano-7-deazaguanine biosynthesis. Functionally, catalyzes the ATP-dependent conversion of 7-carboxy-7-deazaguanine (CDG) to 7-cyano-7-deazaguanine (preQ(0)). The protein is 7-cyano-7-deazaguanine synthase of Methanococcus vannielii (strain ATCC 35089 / DSM 1224 / JCM 13029 / OCM 148 / SB).